The chain runs to 997 residues: LPS-assembly protein LptD (997 aa).

A signal peptide spans 1–27 (MLYSPLYQSIRLILFGALGLSSLTVSA).

It belongs to the LptD family. In terms of assembly, component of the lipopolysaccharide transport and assembly complex. Interacts with LptE and LptA.

It is found in the cell outer membrane. Its function is as follows. Together with LptE, is involved in the assembly of lipopolysaccharide (LPS) at the surface of the outer membrane. This Psychrobacter cryohalolentis (strain ATCC BAA-1226 / DSM 17306 / VKM B-2378 / K5) protein is LPS-assembly protein LptD.